A 522-amino-acid polypeptide reads, in one-letter code: Glutamate--cysteine ligase, chloroplastic (522 aa).

Intrachain disulfides connect Cys-186/Cys-406 and Cys-349/Cys-364.

It belongs to the carboxylate-amine ligase family. Glutamate--cysteine ligase type 2 subfamily. As to quaternary structure, homodimer or monomer when oxidized or reduced, respectively. Post-translationally, the Cys-186-Cys-406 disulfide bridge is known to modulate the enzyme activity according to the redox status. The oxidized form constitutes the active enzyme. As to expression, abundant in leaves and roots. Expressed to a high level in leaf trichomes of mature plant.

Its subcellular location is the plastid. The protein resides in the chloroplast. It catalyses the reaction L-cysteine + L-glutamate + ATP = gamma-L-glutamyl-L-cysteine + ADP + phosphate + H(+). It participates in sulfur metabolism; glutathione biosynthesis; glutathione from L-cysteine and L-glutamate: step 1/2. With respect to regulation, feedback inhibition by glutathione. Inhibited by buthionine sulfoximine and cystamine. Functionally, seems to play an important role in controlling the expression of resistance responses like the regulation of salicylic acid (SA) and phytoalexin (camalexin) production. Involved in resistance to fungal and bacterial pathogens. Required for the regulation of cell proliferation in root apical meristems through the GSH-dependent developmental pathway. Also participates in the detoxification process, the antioxidant response and is essential for embryo development and proper seed maturation. This chain is Glutamate--cysteine ligase, chloroplastic (GSH1), found in Arabidopsis thaliana (Mouse-ear cress).